Consider the following 142-residue polypeptide: Hemoglobin subunit alpha-1 (142 aa).

Positions 2-142 (VLSPADKTNI…VSTVLTSKYR (141 aa)) constitute a Globin domain. His-59 contributes to the O2 binding site. His-88 is a binding site for heme b.

It belongs to the globin family. Heterotetramer of two alpha chains and two beta chains. In terms of tissue distribution, red blood cells.

In terms of biological role, involved in oxygen transport from the lung to the various peripheral tissues. This is Hemoglobin subunit alpha-1 from Arctocephalus galapagoensis (Galapagoes fur seal).